The sequence spans 493 residues: UDP-N-acetylmuramoylalanine--D-glutamate ligase (493 aa).

126 to 132 (GTNGKTT) contributes to the ATP binding site.

The protein belongs to the MurCDEF family.

It localises to the cytoplasm. The catalysed reaction is UDP-N-acetyl-alpha-D-muramoyl-L-alanine + D-glutamate + ATP = UDP-N-acetyl-alpha-D-muramoyl-L-alanyl-D-glutamate + ADP + phosphate + H(+). It functions in the pathway cell wall biogenesis; peptidoglycan biosynthesis. Functionally, cell wall formation. Catalyzes the addition of glutamate to the nucleotide precursor UDP-N-acetylmuramoyl-L-alanine (UMA). In Mycolicibacterium smegmatis (strain ATCC 700084 / mc(2)155) (Mycobacterium smegmatis), this protein is UDP-N-acetylmuramoylalanine--D-glutamate ligase.